Consider the following 335-residue polypeptide: Beta-ketoacyl-[acyl-carrier-protein] synthase III (335 aa).

Active-site residues include Cys-120 and His-261. The ACP-binding stretch occupies residues 262–266 (QANER). The active site involves Asn-291.

Belongs to the thiolase-like superfamily. FabH family. In terms of assembly, homodimer.

Its subcellular location is the cytoplasm. It catalyses the reaction malonyl-[ACP] + acetyl-CoA + H(+) = 3-oxobutanoyl-[ACP] + CO2 + CoA. It participates in lipid metabolism; fatty acid biosynthesis. Functionally, catalyzes the condensation reaction of fatty acid synthesis by the addition to an acyl acceptor of two carbons from malonyl-ACP. Catalyzes the first condensation reaction which initiates fatty acid synthesis and may therefore play a role in governing the total rate of fatty acid production. Possesses both acetoacetyl-ACP synthase and acetyl transacylase activities. Its substrate specificity determines the biosynthesis of branched-chain and/or straight-chain of fatty acids. In Chlamydia pneumoniae (Chlamydophila pneumoniae), this protein is Beta-ketoacyl-[acyl-carrier-protein] synthase III.